The sequence spans 107 residues: Bombesin (107 aa).

A signal peptide spans 1–26 (MSAIPLNRILPLGFLLIFSFISLSSC). Positions 27 to 41 (MEFVEDPNNQGGLNL) are excised as a propeptide. Gln-42 carries the post-translational modification Pyrrolidone carboxylic acid. Met-55 carries the post-translational modification Methionine amide. A propeptide spanning residues 56-107 (GKKSLQDTDFEEMESFAKRNVENMKAESERELRHAQLVVRNILEQYLKNMQN) is cleaved from the precursor.

In terms of tissue distribution, expressed by the skin glands.

The protein localises to the secreted. Functionally, stimulates smooth muscle contraction. Role in induction of hypothermia, stimulation of DNA replication and release of many gastrointestinal hormones. Possesses insulin-releasing activity. This is Bombesin from Bombina variegata (Yellow-bellied toad).